Consider the following 97-residue polypeptide: DNA replication protein 1 (97 aa).

Residues 49–78 (IELEKKMTKLEHENKLMKNALYELSRMENN) adopt a coiled-coil conformation.

The protein belongs to the phi29likevirus DNA replication protein 1 family. In terms of assembly, homomultimer. Self-associates into large complexes forming long filamentous structures. Interacts (via N-terminus) with the primer terminal protein.

Its subcellular location is the host membrane. Functionally, protein that assembles into highly ordered structures and provides a specific site for viral DNA replication. Probably anchors the viral DNA replisome to the host membrane. The protein is DNA replication protein 1 (1C) of Bacillus subtilis (Bacteriophage PZA).